We begin with the raw amino-acid sequence, 77 residues long: U8-lycotoxin-Ls1b (77 aa).

The signal sequence occupies residues 1 to 20 (MKLIIFTGLVLFAIVSLIEA). Residues 21–26 (QAENEK) constitute a propeptide that is removed on maturation.

This sequence belongs to the neurotoxin 19 (CSTX) family. 08 (U8-Lctx) subfamily. Contains 4 disulfide bonds. In terms of tissue distribution, expressed by the venom gland.

It is found in the secreted. The polypeptide is U8-lycotoxin-Ls1b (Lycosa singoriensis (Wolf spider)).